Consider the following 538-residue polypeptide: Inositol-3-phosphate synthase (538 aa).

NAD(+) is bound by residues Gly74, Gly75, Asn76, Asn77, Asp150, Ser186, Val187, Gln197, Asp198, Arg200, Thr247, Ala248, Asn249, Thr250, Gly298, Ser299, Asp323, Ser326, Asn357, Asn358, Asp359, Lys372, Gly412, Asp413, Asp441, and Ser442.

It belongs to the myo-inositol 1-phosphate synthase family. In terms of assembly, homotetramer. NAD(+) serves as cofactor.

It localises to the cytoplasm. The catalysed reaction is D-glucose 6-phosphate = 1D-myo-inositol 3-phosphate. It functions in the pathway polyol metabolism; myo-inositol biosynthesis; myo-inositol from D-glucose 6-phosphate: step 1/2. Functionally, key enzyme in myo-inositol biosynthesis pathway that catalyzes the conversion of glucose 6-phosphate to 1-myo-inositol 1-phosphate in a NAD-dependent manner. Rate-limiting enzyme in the synthesis of all inositol-containing compounds. The polypeptide is Inositol-3-phosphate synthase (INO1) (Candida glabrata (strain ATCC 2001 / BCRC 20586 / JCM 3761 / NBRC 0622 / NRRL Y-65 / CBS 138) (Yeast)).